The chain runs to 413 residues: Arginine biosynthesis bifunctional protein ArgJ 1 (413 aa).

Substrate is bound by residues Thr154, Lys180, Thr191, Glu277, Asn408, and Thr413. Residue Thr191 is the Nucleophile of the active site.

It belongs to the ArgJ family. As to quaternary structure, heterotetramer of two alpha and two beta chains.

It localises to the cytoplasm. It carries out the reaction N(2)-acetyl-L-ornithine + L-glutamate = N-acetyl-L-glutamate + L-ornithine. The enzyme catalyses L-glutamate + acetyl-CoA = N-acetyl-L-glutamate + CoA + H(+). The protein operates within amino-acid biosynthesis; L-arginine biosynthesis; L-ornithine and N-acetyl-L-glutamate from L-glutamate and N(2)-acetyl-L-ornithine (cyclic): step 1/1. Its pathway is amino-acid biosynthesis; L-arginine biosynthesis; N(2)-acetyl-L-ornithine from L-glutamate: step 1/4. In terms of biological role, catalyzes two activities which are involved in the cyclic version of arginine biosynthesis: the synthesis of N-acetylglutamate from glutamate and acetyl-CoA as the acetyl donor, and of ornithine by transacetylation between N(2)-acetylornithine and glutamate. The chain is Arginine biosynthesis bifunctional protein ArgJ 1 from Nostoc sp. (strain PCC 7120 / SAG 25.82 / UTEX 2576).